We begin with the raw amino-acid sequence, 573 residues long: MAAVPPLRDRLSFLHRLPILLKGTSDDSIPCPGYLFEEIAKISHESLGSSQCLLEYLLNRLDSSSGHVKLKVLKILLYLCGHGSSSFLLILRRNSALIQEATAFSGPPDPLHGNSLYQKVRAAAQDLGSTLFSDAVPQPPSQPPQIPPPAGMGAQARPLSALQGFGYTKESSRTGSAGETFLSTIQRAAEVVANAVRPGPDNPCTKGPLPYGDSYQPAVTPSASHTHPNPGNLLPGAILGARAVRHQPGQAGGGWDELDSSPSSQNSSCTSNLSRASDSGSRSGSDSHSGTSREPGDLAERAEATPPNDCQQELNLVRTVTQGPRVFLSREETQHFIKECGLLNCEAVLELLLRQLVGTSECEQMRALCAIASFGSADLLPQEHVLLLCRQQLQELGAGSPGPVTNKATKILRHFEASCGQQLPTLRLCAQPNSAAAPVGPADLLTSPVPAPGSQVFLQPLSSATVVPRSPVLFPSPNTLPPSALEEPSEVRTQLVCSSEQGTESEQRLENTDTPEDSSSPLPWSPNSLFAGMELVACPRLPCHSSQDLQTDLQKVTTEAPVSEPSAFAFLNM.

One can recognise an ENTH domain in the interval 8–141 (RDRLSFLHRL…FSDAVPQPPS (134 aa)). Disordered regions lie at residues 136-155 (VPQPPSQPPQIPPPAGMGAQ) and 194-311 (NAVR…NDCQ). The span at 137 to 150 (PQPPSQPPQIPPPA) shows a compositional bias: pro residues. Residues 217 to 229 (PAVTPSASHTHPN) show a composition bias toward polar residues. A compositionally biased stretch (low complexity) spans 260 to 293 (SSPSSQNSSCTSNLSRASDSGSRSGSDSHSGTSR). Over residues 294–303 (EPGDLAERAE) the composition is skewed to basic and acidic residues. Serine 400 is modified (phosphoserine). The interval 497-526 (CSSEQGTESEQRLENTDTPEDSSSPLPWSP) is disordered. An interaction with AP4B1 region spans residues 526 to 536 (PNSLFAGMELV). The segment at 563-573 (SEPSAFAFLNM) is interaction with AP4E1.

In terms of assembly, interacts with AP4B1 and AP4E1; the interaction is direct and mediates the association of TEPSIN with the adapter-like complex 4 (AP-4), a heterotetramer composed of AP4B1, AP4E1, AP4M1 and AP4S1.

Its subcellular location is the golgi apparatus. The protein localises to the trans-Golgi network membrane. It localises to the cytoplasmic vesicle. It is found in the cytoplasm. The protein resides in the cytosol. Its function is as follows. Associates with the adapter-like complex 4 (AP-4) and may therefore play a role in vesicular trafficking of proteins at the trans-Golgi network. This Mus musculus (Mouse) protein is AP-4 complex accessory subunit Tepsin.